Here is a 243-residue protein sequence, read N- to C-terminus: Uridylate kinase (243 aa).

15-18 serves as a coordination point for ATP; that stretch reads KLSG. Residues 23–28 form an involved in allosteric activation by GTP region; it reads GEEGFG. Glycine 57 is a UMP binding site. Residues glycine 58 and arginine 62 each contribute to the ATP site. Residues aspartate 77 and 138–145 each bind UMP; that span reads TGNPFFTT. ATP-binding residues include threonine 165, phenylalanine 171, and aspartate 174.

This sequence belongs to the UMP kinase family. In terms of assembly, homohexamer.

It is found in the cytoplasm. It carries out the reaction UMP + ATP = UDP + ADP. It functions in the pathway pyrimidine metabolism; CTP biosynthesis via de novo pathway; UDP from UMP (UMPK route): step 1/1. With respect to regulation, allosterically activated by GTP. Inhibited by UTP. In terms of biological role, catalyzes the reversible phosphorylation of UMP to UDP. This Aliivibrio fischeri (strain ATCC 700601 / ES114) (Vibrio fischeri) protein is Uridylate kinase.